Consider the following 624-residue polypeptide: Exocyst complex component EXO70B1 (624 aa).

The segment at 148 to 176 (FGLNPQGDAGAMNHRFDSEEEEDDDRDFN) is disordered.

It belongs to the EXO70 family. Interacts with EXO70B2, SEC5A and EXO84B. Binds to PUB18. Binds directly to B1L at the plasma membrane and in small vesicles. In terms of processing, target of the E3 ubiquitin-protein ligase PUB18 that mediates its ubiquitination and degradation via the 26S proteasome.

The protein localises to the cytoplasmic vesicle. It localises to the phagosome. The protein resides in the endomembrane system. It is found in the cell membrane. Its subcellular location is the vesicle. Its function is as follows. Component of an exocyst subcomplex specifically involved in autophagy-related, Golgi-independent membrane traffic to the vacuole. Regulates autophagosome formation and autophagy-related Golgi-independent import into the vacuole. Positive regulator of both abscisic acid (ABA)-promoted and mannitol (drought)-promoted stomatal closure. Involved in the regulation of lateral root formation. This Arabidopsis thaliana (Mouse-ear cress) protein is Exocyst complex component EXO70B1.